We begin with the raw amino-acid sequence, 263 residues long: Lens fiber major intrinsic protein (263 aa).

The Cytoplasmic portion of the chain corresponds to 1 to 9; that stretch reads MWELRSASF. The helical transmembrane segment at 10–29 threads the bilayer; the sequence is WRAIFAEFFATLFYVFFGLG. The Extracellular segment spans residues 30–41; that stretch reads SSLRWAPGPLHV. The chain crosses the membrane as a helical span at residues 42–59; it reads LQVAMAFGLALATLVQSV. At 60 to 61 the chain is on the cytoplasmic side; sequence GH. An intramembrane region (discontinuously helical) is located at residues 62–77; sequence ISGAHVNPAVTFAFLV. The short motif at 68-70 is the NPA 1 element; that stretch reads NPA. At 78–82 the chain is on the cytoplasmic side; it reads GSQMS. A helical transmembrane segment spans residues 83–106; sequence LLRAFCYMAAQLLGAVAGAAVLYS. Topologically, residues 107-127 are extracellular; the sequence is VTPPAVRGNLALNTLHPAVSV. The helical transmembrane segment at 128–148 threads the bilayer; that stretch reads GQATTVEIFLTLQFVLCIFAT. Over 149–156 the chain is Cytoplasmic; sequence YDERRNGQ. Residues 157 to 175 form a helical membrane-spanning segment; it reads LGSVALAVGFSLALGHLFG. Residues 176-178 are Extracellular-facing; sequence MYY. An intramembrane region (discontinuously helical) is located at residues 179–193; it reads TGAGMNPARSFAPAI. Residues 184 to 186 carry the NPA 2 motif; it reads NPA. The Extracellular portion of the chain corresponds to 194–200; that stretch reads LTGNFTN. Residues 201 to 222 form a helical membrane-spanning segment; the sequence is HWVYWVGPIIGGGLGSLLYDFL. The Cytoplasmic segment spans residues 223-263; sequence LFPRLKSISERLSVLKGAKPDVSNGQPEVTGEPVELNTQAL. The segment at 227–237 is interaction with CALM; sequence LKSISERLSVL. Residues S235 and S245 each carry the phosphoserine modification. Deamidated asparagine; by deterioration occurs at positions 246 and 259.

It belongs to the MIP/aquaporin (TC 1.A.8) family. In terms of assembly, homotetramer; each monomer provides an independent water pore. Two homotetramers on opposing membranes can dimerize, forming a cell-cell junction. Interacts with CALM; the calcium-calmodulin/CALM complex interacts with the cytoplasmic domains of two aquaporins, leading to channel closure. Interacts with BFSP1 (via C-terminus); prevents calcium-dependent inhibition of the water channel activity. Subject to partial proteolytic cleavage in the eye lens core. Partial proteolysis promotes interactions between tetramers from adjoining membranes. Post-translationally, fatty acylated at Met-1 and Lys-238. The acyl modifications, in decreasing order of ion abundance, are: oleoyl (C18:1) &gt; palmitoyl (C16:0) &gt; stearoyl (C18:0) &gt; eicosenoyl (C20:1) &gt; dihomo-gamma-linolenoyl (C20:3) &gt; palmitoleoyl (C16:1) &gt; eicosadienoyl (C20:2). Expressed in the cortex and nucleus of the retina lens (at protein level). Major component of lens fiber gap junctions.

Its subcellular location is the cell membrane. The protein resides in the cell junction. It carries out the reaction H2O(in) = H2O(out). The water channel activity is inhibited by calcium through calmodulin/CALM. Functionally, aquaporins form homotetrameric transmembrane channels, with each monomer independently mediating water transport across the plasma membrane along its osmotic gradient. Specifically expressed in lens fiber cells, this aquaporin is crucial for maintaining lens water homeostasis and transparency. Beyond water permeability, it also acts as a cell-to-cell adhesion molecule, forming thin junctions between lens fiber cells that are essential for maintaining the ordered structure and transparency of the lens. The sequence is that of Lens fiber major intrinsic protein from Homo sapiens (Human).